The primary structure comprises 201 residues: MVFIADYGAGNLRSVHKAFDYLGIEAVVSDKASEMSRYDKVLIPGVGAFGPAMEALNRQGFDEAIREHIDKGRSVLGICLGMQLFLSESEEMGAYKGLDIVPGKVLRFTSSTDKIPQIGWNSVDYCKDSVLFRNVPDQSYFYFVHSYYCAPDEPESVAATTFFAGKKFCSAIEKNGIFAVQFHPEKSSEAGLQVLKNFAEF.

The 201-residue stretch at 1–201 (MVFIADYGAG…LQVLKNFAEF (201 aa)) folds into the Glutamine amidotransferase type-1 domain. Cysteine 79 acts as the Nucleophile in catalysis. Active-site residues include histidine 183 and glutamate 185.

Heterodimer of HisH and HisF.

Its subcellular location is the cytoplasm. The catalysed reaction is 5-[(5-phospho-1-deoxy-D-ribulos-1-ylimino)methylamino]-1-(5-phospho-beta-D-ribosyl)imidazole-4-carboxamide + L-glutamine = D-erythro-1-(imidazol-4-yl)glycerol 3-phosphate + 5-amino-1-(5-phospho-beta-D-ribosyl)imidazole-4-carboxamide + L-glutamate + H(+). It catalyses the reaction L-glutamine + H2O = L-glutamate + NH4(+). The protein operates within amino-acid biosynthesis; L-histidine biosynthesis; L-histidine from 5-phospho-alpha-D-ribose 1-diphosphate: step 5/9. IGPS catalyzes the conversion of PRFAR and glutamine to IGP, AICAR and glutamate. The HisH subunit catalyzes the hydrolysis of glutamine to glutamate and ammonia as part of the synthesis of IGP and AICAR. The resulting ammonia molecule is channeled to the active site of HisF. The polypeptide is Imidazole glycerol phosphate synthase subunit HisH (Chlorobaculum tepidum (strain ATCC 49652 / DSM 12025 / NBRC 103806 / TLS) (Chlorobium tepidum)).